The chain runs to 419 residues: Peptide chain release factor subunit 1 (419 aa).

Belongs to the eukaryotic release factor 1 family. Heterodimer of two subunits, one of which binds GTP.

It is found in the cytoplasm. Functionally, directs the termination of nascent peptide synthesis (translation) in response to the termination codons UAA, UAG and UGA. The protein is Peptide chain release factor subunit 1 of Methanococcus maripaludis (strain C5 / ATCC BAA-1333).